We begin with the raw amino-acid sequence, 199 residues long: Peroxiredoxin-1 (199 aa).

Residue Ser-2 is modified to N-acetylserine. One can recognise a Thioredoxin domain in the interval 6 to 165 (AKIGHPAPNF…TLRLVQAFQF (160 aa)). The residue at position 7 (Lys-7) is an N6-acetyllysine; alternate. Lys-7 participates in a covalent cross-link: Glycyl lysine isopeptide (Lys-Gly) (interchain with G-Cter in SUMO2); alternate. Lys-16 and Lys-27 each carry N6-acetyllysine. Ser-32 carries the post-translational modification Phosphoserine. N6-acetyllysine; alternate is present on Lys-35. An N6-succinyllysine; alternate modification is found at Lys-35. The Cysteine sulfenic acid (-SOH) intermediate role is filled by Cys-52. The residue at position 90 (Thr-90) is a Phosphothreonine; by CDK1. Residue Lys-120 forms a Glycyl lysine isopeptide (Lys-Gly) (interchain with G-Cter in SUMO2) linkage. N6-acetyllysine is present on Lys-136. A disordered region spans residues 176 to 199 (GWKPGSDTIKPDVQKSKEYFSKQK). Positions 184–199 (IKPDVQKSKEYFSKQK) are enriched in basic and acidic residues. Lys-185 participates in a covalent cross-link: Glycyl lysine isopeptide (Lys-Gly) (interchain with G-Cter in SUMO1). Residue Lys-197 is modified to N6-acetyllysine.

This sequence belongs to the peroxiredoxin family. AhpC/Prx1 subfamily. Homodimer; disulfide-linked, upon oxidation. 5 homodimers assemble to form a ring-like decamer. Interacts with GDPD5; forms a mixed-disulfide with GDPD5. Interacts with SESN1 and SESN2. Interacts with FAM107A. In terms of processing, phosphorylated on Thr-90 during the M-phase, which leads to a more than 80% decrease in enzymatic activity. Post-translationally, acetylation increases reducing activity and resistance to superoxidation. Deacetylated by HDAC6 which decreases reducing activity. The enzyme can be inactivated by further oxidation of the cysteine sulfenic acid (C(P)-SOH) to sulphinic acid (C(P)-SO2H) instead of its condensation to a disulfide bond. It can be reactivated by forming a transient disulfide bond with sulfiredoxin SRXN1, which reduces the cysteine sulfinic acid in an ATP- and Mg-dependent manner.

It localises to the cytoplasm. It is found in the melanosome. It carries out the reaction a hydroperoxide + [thioredoxin]-dithiol = an alcohol + [thioredoxin]-disulfide + H2O. In terms of biological role, thiol-specific peroxidase that catalyzes the reduction of hydrogen peroxide and organic hydroperoxides to water and alcohols, respectively. Plays a role in cell protection against oxidative stress by detoxifying peroxides and as sensor of hydrogen peroxide-mediated signaling events. Might participate in the signaling cascades of growth factors and tumor necrosis factor-alpha by regulating the intracellular concentrations of H(2)O(2). Reduces an intramolecular disulfide bond in GDPD5 that gates the ability to GDPD5 to drive postmitotic motor neuron differentiation. The protein is Peroxiredoxin-1 (PRDX1) of Homo sapiens (Human).